The primary structure comprises 995 residues: tRNA wybutosine-synthesizing protein 2/3/4 (995 aa).

The tract at residues 1–212 is tRNA wybutosine-synthesizing protein 3 homolog; that stretch reads MDFEKRKAAT…GFSVALASNG (212 aa). Kelch repeat units lie at residues 284 to 335, 336 to 386, 387 to 436, 437 to 486, and 488 to 535; these read EVIV…MVGD, FMFV…SVGT, KVYI…AYGS, QSFM…VYKH, and IGII…SILG. The segment at 661 to 995 is tRNA wybutosine-synthesizing protein 2 homolog; it reads ERSEENNLTK…RHLVADVRCR (335 aa). Residues Lys828 and 896-897 each bind S-adenosyl-L-methionine; that span reads DN.

In the C-terminal section; belongs to the class I-like SAM-binding methyltransferase superfamily. TRM5/TYW2 family. The protein in the N-terminal section; belongs to the TYW3 family.

It catalyses the reaction 4-demethyl-7-[(3S)-3-amino-3-carboxypropyl]wyosine(37) in tRNA(Phe) + S-adenosyl-L-methionine = 7-[(3S)-3-amino-3-carboxypropyl]wyosine(37) in tRNA(Phe) + S-adenosyl-L-homocysteine + H(+). The catalysed reaction is 4-demethylwyosine(37) in tRNA(Phe) + S-adenosyl-L-methionine = 4-demethyl-7-[(3S)-3-amino-3-carboxypropyl]wyosine(37) in tRNA(Phe) + S-methyl-5'-thioadenosine + H(+). The protein operates within tRNA modification; wybutosine-tRNA(Phe) biosynthesis. S-adenosyl-L-methionine-dependent transferase that acts as a component of the wybutosine biosynthesis pathway. Wybutosine is a hyper modified guanosine with a tricyclic base found at the 3'-position adjacent to the anticodon of eukaryotic phenylalanine tRNA. The polypeptide is tRNA wybutosine-synthesizing protein 2/3/4 (Arabidopsis thaliana (Mouse-ear cress)).